Here is a 427-residue protein sequence, read N- to C-terminus: Peptidase B (427 aa).

Positions 195 and 200 each coordinate Mn(2+). The active site involves lysine 207. Mn(2+) is bound by residues aspartate 218, aspartate 277, and glutamate 279. Arginine 281 is a catalytic residue.

It belongs to the peptidase M17 family. Homohexamer. Requires Mn(2+) as cofactor.

It localises to the cytoplasm. The catalysed reaction is Release of an N-terminal amino acid, Xaa, from a peptide or arylamide. Xaa is preferably Glu or Asp but may be other amino acids, including Leu, Met, His, Cys and Gln.. Functionally, probably plays an important role in intracellular peptide degradation. This chain is Peptidase B, found in Salmonella agona (strain SL483).